Here is a 465-residue protein sequence, read N- to C-terminus: Cystathionine beta-lyase (465 aa).

Lysine 213 is modified (N6-(pyridoxal phosphate)lysine).

It belongs to the trans-sulfuration enzymes family. The cofactor is pyridoxal 5'-phosphate.

Its subcellular location is the cytoplasm. The protein resides in the nucleus. It carries out the reaction L,L-cystathionine + H2O = L-homocysteine + pyruvate + NH4(+). It catalyses the reaction an S-substituted L-cysteine + H2O = a thiol + pyruvate + NH4(+). It functions in the pathway amino-acid biosynthesis; L-methionine biosynthesis via de novo pathway; L-homocysteine from L-cystathionine: step 1/1. The sequence is that of Cystathionine beta-lyase (STR3) from Saccharomyces cerevisiae (strain ATCC 204508 / S288c) (Baker's yeast).